The chain runs to 470 residues: Glutamate--tRNA ligase (470 aa).

A 'HIGH' region motif is present at residues 9-19 (PSPTGFLHVGG). Residues 236–240 (RLSKR) carry the 'KMSKS' region motif. An ATP-binding site is contributed by Lys-239.

Belongs to the class-I aminoacyl-tRNA synthetase family. Glutamate--tRNA ligase type 1 subfamily. In terms of assembly, monomer.

The protein localises to the cytoplasm. The catalysed reaction is tRNA(Glu) + L-glutamate + ATP = L-glutamyl-tRNA(Glu) + AMP + diphosphate. Catalyzes the attachment of glutamate to tRNA(Glu) in a two-step reaction: glutamate is first activated by ATP to form Glu-AMP and then transferred to the acceptor end of tRNA(Glu). In Legionella pneumophila subsp. pneumophila (strain Philadelphia 1 / ATCC 33152 / DSM 7513), this protein is Glutamate--tRNA ligase.